A 239-amino-acid chain; its full sequence is Ribosomal RNA small subunit methyltransferase G (239 aa).

Residues Gly-77, Phe-82, 128–129, and Arg-146 each bind S-adenosyl-L-methionine; that span reads AE. Residues 216–239 are disordered; it reads KRRQTSKKYPRKPGTPNKSPLVES.

This sequence belongs to the methyltransferase superfamily. RNA methyltransferase RsmG family.

The protein localises to the cytoplasm. In terms of biological role, specifically methylates the N7 position of guanine in position 535 of 16S rRNA. This Staphylococcus epidermidis (strain ATCC 35984 / DSM 28319 / BCRC 17069 / CCUG 31568 / BM 3577 / RP62A) protein is Ribosomal RNA small subunit methyltransferase G.